We begin with the raw amino-acid sequence, 1097 residues long: DNA-directed RNA polymerase subunit beta (1097 aa).

Positions 1072–1097 (QDINPRRNTPSRPTYESLGTSEYEED) are disordered. Polar residues predominate over residues 1077–1091 (RRNTPSRPTYESLGT).

The protein belongs to the RNA polymerase beta chain family. As to quaternary structure, in cyanobacteria the RNAP catalytic core is composed of 2 alpha, 1 beta, 1 beta', 1 gamma and 1 omega subunit. When a sigma factor is associated with the core the holoenzyme is formed, which can initiate transcription.

The enzyme catalyses RNA(n) + a ribonucleoside 5'-triphosphate = RNA(n+1) + diphosphate. DNA-dependent RNA polymerase catalyzes the transcription of DNA into RNA using the four ribonucleoside triphosphates as substrates. This chain is DNA-directed RNA polymerase subunit beta, found in Prochlorococcus marinus (strain AS9601).